The sequence spans 908 residues: Zinc finger CCCH domain-containing protein 41 (908 aa).

Over residues 1–13 the composition is skewed to polar residues; that stretch reads MELSVSSPKQSVL. Positions 1-124 are disordered; sequence MELSVSSPKQ…GRGNYGSWAQ (124 aa). The segment covering 20–34 has biased composition (acidic residues); it reads SDPEEEHEISEEEDD. 2 stretches are compositionally biased toward polar residues: residues 48-59 and 90-105; these read SQSLEQDSSDQA and GQRV…SNPM. The segment at 200–228 adopts a C3H1-type zinc-finger fold; the sequence is GIPRQRCRDFEERGFCLRGDMCPMEHGMN. The disordered stretch occupies residues 333–375; it reads NVAPLDDSNQDAAENGCGIRDSRSTSQSVWGRMKGSNSQANSK. Positions 356–373 are enriched in polar residues; the sequence is STSQSVWGRMKGSNSQAN. One can recognise an RRM domain in the interval 438–510; the sequence is RTLFVNYVPH…RFIKLWWANR (73 aa). Disordered regions lie at residues 558-590, 629-695, and 807-908; these read PTFQ…LQQK, VVKR…KQRP, and RESN…QIHQ. Positions 559-588 are enriched in polar residues; it reads TFQTGGAPSSSEQPKPVVVTTSGPKVTPLQ. A coiled-coil region spans residues 587-630; sequence LQQKKADTLERLKETLRKKQEMLEQKRNEYRKKLATLEKQGTVV. Basic and acidic residues predominate over residues 630–647; sequence VKREEADEPDAKRVKLDT. Residue Ser657 is modified to Phosphoserine. Over residues 677–688 the composition is skewed to polar residues; sequence AKLSTETPSPDS. The span at 807–828 shows a compositional bias: low complexity; it reads RESNNNNNNSNSLSVSRDNLSS. Residues 846 to 863 show a composition bias toward polar residues; sequence KTSSTEEPENTNVSGDND. The segment covering 865–886 has biased composition (basic and acidic residues); sequence TLDKQETKESDNDNNKSNHESI. Residues 898–908 are compositionally biased toward acidic residues; sequence TDEEQSEQIHQ.

The polypeptide is Zinc finger CCCH domain-containing protein 41 (Arabidopsis thaliana (Mouse-ear cress)).